The chain runs to 214 residues: MNLILLGPPGVGKGTQAKLLIDRFGIPQISTGDILRAAVKELTPMGAKAKGYMDSGALVPDEVVIGIVEERLAQADCQKGFILDGFPRTVPQADALGQVLSGMGKSIDHVVSLSVDKGELLKRLTGRRACANCGAGYHVDFAPSKVAGVCDACSGQLVQREDDKEETILNRLAVYEAQTAPLIAYYQAAGLLRSVDGLGTVEGVQSGILAAIRA.

10 to 15 (GVGKGT) provides a ligand contact to ATP. The NMP stretch occupies residues 30–59 (STGDILRAAVKELTPMGAKAKGYMDSGALV). Residues Thr-31, Arg-36, 57–59 (ALV), 85–88 (GFPR), and Gln-92 contribute to the AMP site. The LID stretch occupies residues 126-163 (GRRACANCGAGYHVDFAPSKVAGVCDACSGQLVQREDD). Position 127 (Arg-127) interacts with ATP. Zn(2+) contacts are provided by Cys-130, Cys-133, Cys-150, and Cys-153. 2 residues coordinate AMP: Arg-160 and Arg-171. Gly-199 serves as a coordination point for ATP.

It belongs to the adenylate kinase family. Monomer.

Its subcellular location is the cytoplasm. The enzyme catalyses AMP + ATP = 2 ADP. It functions in the pathway purine metabolism; AMP biosynthesis via salvage pathway; AMP from ADP: step 1/1. Catalyzes the reversible transfer of the terminal phosphate group between ATP and AMP. Plays an important role in cellular energy homeostasis and in adenine nucleotide metabolism. In Citrifermentans bemidjiense (strain ATCC BAA-1014 / DSM 16622 / JCM 12645 / Bem) (Geobacter bemidjiensis), this protein is Adenylate kinase.